Reading from the N-terminus, the 339-residue chain is Polyhydroxybutyrate depolymerase (339 aa).

The signal sequence occupies residues 1-20 (MFDSVKIAWLVALGAAQVAA). Ser-39 is a catalytic residue. An intrachain disulfide couples Cys-70 to Cys-79. Asp-121 is a catalytic residue. N-linked (GlcNAc...) asparagine glycosylation occurs at Asn-144. The active site involves His-155. Intrachain disulfides connect Cys-169/Cys-180, Cys-234/Cys-241, and Cys-250/Cys-304. Trp-307 contacts (3R)-hydroxybutanoate trimer.

This sequence belongs to the carbohydrate esterase 1 (CE1) family.

It localises to the secreted. It carries out the reaction [(3R)-hydroxybutanoate](n) + H2O = [(3R)-hydroxybutanoate](n-1) + (R)-3-hydroxybutanoate + H(+). Its activity is regulated as follows. The enzyme is completely inhibited by dithiothreitol (DTT) and diisopropylfluorophosphate (DFP), and partially inhibited by HgCl(2) and by enzyme3-(p-nitrophenoxy)propane (EPNP). Activity is not affected by N-ethylmaleimide (NEM) or phenylmethylsulfonyl fluoride (PMSF). Esterase involved in the hydrolysis of polyhydroxybutyrate, a microbial polyester that can be produced from renewable resources. The chain is Polyhydroxybutyrate depolymerase from Talaromyces funiculosus (Fruitlet core rot fungus).